A 351-amino-acid chain; its full sequence is Thiamine-phosphate synthase (351 aa).

Positions 1 to 129 (MVEPYSQKEQ…AKACKQMRYQ (129 aa)) are unknown. The disordered stretch occupies residues 65 to 85 (LRAARDTPGDPGTELTHPQEE). A thiamine-phosphate synthase region spans residues 130 to 351 (VYTLESNLMG…SQLNRIKPEL (222 aa)). 4-amino-2-methyl-5-(diphosphooxymethyl)pyrimidine-binding positions include 177 to 181 (QYRDK) and N209. Residues D210 and D229 each coordinate Mg(2+). Residue S248 coordinates 4-amino-2-methyl-5-(diphosphooxymethyl)pyrimidine. Residue 274–276 (TPT) coordinates 2-[(2R,5Z)-2-carboxy-4-methylthiazol-5(2H)-ylidene]ethyl phosphate. Position 277 (K277) interacts with 4-amino-2-methyl-5-(diphosphooxymethyl)pyrimidine. Residue G304 participates in 2-[(2R,5Z)-2-carboxy-4-methylthiazol-5(2H)-ylidene]ethyl phosphate binding.

This sequence belongs to the thiamine-phosphate synthase family. It depends on Mg(2+) as a cofactor.

It carries out the reaction 2-[(2R,5Z)-2-carboxy-4-methylthiazol-5(2H)-ylidene]ethyl phosphate + 4-amino-2-methyl-5-(diphosphooxymethyl)pyrimidine + 2 H(+) = thiamine phosphate + CO2 + diphosphate. The enzyme catalyses 2-(2-carboxy-4-methylthiazol-5-yl)ethyl phosphate + 4-amino-2-methyl-5-(diphosphooxymethyl)pyrimidine + 2 H(+) = thiamine phosphate + CO2 + diphosphate. The catalysed reaction is 4-methyl-5-(2-phosphooxyethyl)-thiazole + 4-amino-2-methyl-5-(diphosphooxymethyl)pyrimidine + H(+) = thiamine phosphate + diphosphate. Its pathway is cofactor biosynthesis; thiamine diphosphate biosynthesis; thiamine phosphate from 4-amino-2-methyl-5-diphosphomethylpyrimidine and 4-methyl-5-(2-phosphoethyl)-thiazole: step 1/1. Its function is as follows. Condenses 4-methyl-5-(beta-hydroxyethyl)thiazole monophosphate (THZ-P) and 2-methyl-4-amino-5-hydroxymethyl pyrimidine pyrophosphate (HMP-PP) to form thiamine monophosphate (TMP). This Nostoc punctiforme (strain ATCC 29133 / PCC 73102) protein is Thiamine-phosphate synthase.